The chain runs to 308 residues: uncharacterized protein (308 aa).

Residues 11-87 enclose the S4 RNA-binding domain; sequence KRLDSLLASL…LKLEVLFEDK (77 aa). Residue Asp131 is part of the active site.

Belongs to the pseudouridine synthase RluA family.

The catalysed reaction is a uridine in RNA = a pseudouridine in RNA. This is an uncharacterized protein from Mycoplasma genitalium (strain ATCC 33530 / DSM 19775 / NCTC 10195 / G37) (Mycoplasmoides genitalium).